A 1300-amino-acid chain; its full sequence is Kinesin-like protein KIN-4C (1300 aa).

The Kinesin motor domain maps to 6-360 (CVRVAVNIRP…LKYANRARNI (355 aa)). Residue 85–92 (GQTGSGKT) coordinates ATP. 3 coiled-coil regions span residues 580-615 (TSVLKQHYEKKVYDLEQEKRALQREIEGLRHNLASI), 653-697 (QLMR…RAWK), and 781-823 (EVTV…AKIS). Basic and acidic residues-rich tracts occupy residues 956–971 (ADENLKNEHSMKKQET) and 1001–1013 (EWKPEHESERESE). 4 disordered regions span residues 956–1018 (ADEN…ESVI), 1097–1132 (NADGKENNSISESEALENGENSQESDEKDKGQQQQV), 1144–1187 (ALAD…RKKW), and 1200–1300 (PALP…TRRV). Composition is skewed to polar residues over residues 1169–1180 (IGNTTGKSNVPR), 1205–1222 (THTNTHLIPEANSVTVDS), 1230–1239 (NSDSGESNSI), and 1275–1288 (GFVQSNSGRASGSR). The segment covering 1289–1300 (TSDEKENHTRRV) has biased composition (basic and acidic residues).

This sequence belongs to the TRAFAC class myosin-kinesin ATPase superfamily. Kinesin family. KIN-4 subfamily. As to quaternary structure, homodimer.

Its function is as follows. Kinesin-like motor protein involved in the control of the oriented deposition of cellulose microfibrils. The sequence is that of Kinesin-like protein KIN-4C from Arabidopsis thaliana (Mouse-ear cress).